The following is a 94-amino-acid chain: Cell division topological specificity factor (94 aa).

The protein belongs to the MinE family.

In terms of biological role, prevents the cell division inhibition by proteins MinC and MinD at internal division sites while permitting inhibition at polar sites. This ensures cell division at the proper site by restricting the formation of a division septum at the midpoint of the long axis of the cell. The sequence is that of Cell division topological specificity factor from Alkalilimnicola ehrlichii (strain ATCC BAA-1101 / DSM 17681 / MLHE-1).